The chain runs to 223 residues: DNA mismatch repair protein MutH (223 aa).

The protein belongs to the MutH family.

It localises to the cytoplasm. Sequence-specific endonuclease that cleaves unmethylated GATC sequences. It is involved in DNA mismatch repair. This is DNA mismatch repair protein MutH from Haemophilus influenzae (strain 86-028NP).